The sequence spans 92 residues: Small ribosomal subunit protein uS19 (92 aa).

The protein belongs to the universal ribosomal protein uS19 family.

Protein S19 forms a complex with S13 that binds strongly to the 16S ribosomal RNA. This chain is Small ribosomal subunit protein uS19, found in Chromobacterium violaceum (strain ATCC 12472 / DSM 30191 / JCM 1249 / CCUG 213 / NBRC 12614 / NCIMB 9131 / NCTC 9757 / MK).